A 398-amino-acid polypeptide reads, in one-letter code: O-methyltransferase penC (398 aa).

D263 contributes to the S-adenosyl-L-methionine binding site. H305 serves as the catalytic Proton acceptor.

This sequence belongs to the class I-like SAM-binding methyltransferase superfamily. Cation-independent O-methyltransferase family.

It functions in the pathway secondary metabolite biosynthesis. Its pathway is alkaloid biosynthesis. The protein operates within mycotoxin biosynthesis. O-methyltransferase; part of the gene cluster that mediates the biosynthesis of penigequinolones, potent insecticidal alkaloids that contain a highly modified 10-carbon prenyl group. The first stage is catalyzed by the nonribosomal peptide synthetase penN that condenses anthranilic acid and O-methyl-L-tyrosine to produce 4'-methoxycyclopeptin. 4'-methoxycyclopeptin is then converted to 4'-methoxydehydrocyclopeptin by the ketoglutarate-dependent dioxygenase penM through dehydrogenation to form a double bond between C-alpha and C-beta of the O-methyltyrosine side chain. PenM also converts its first product methoxydehydrocyclopeptin to 4'-methoxycyclopenin. The following conversion of 4'methoxycyclopenin into 4'-methoxyviridicatin is catalyzed by the cyclopenase penL. 4'-methoxyviridicatin is the precursor of quinolone natural products, and is further converted to quinolinone B. The prenyltransferase penI then catalyzes the canonical Friedel-Crafts alkylation of quinolinone B with dimethylallyl cation to yield dimethylallyl quinolone, which is subjected to FAD-dependent dehydrogenation by the FAD-linked oxidoreductase penH to yield conjugated aryl diene. The delta(3') double bond then serves as the site of the second alkylation with DMAPP catalyzed by the prenyltransferase penG to yield a carbenium ion intermediate, which can be attacked by H(2)O to yield a styrenyl quinolone containing a C3'-hydroxyprenyl chain, or undergo cyclization to yield yaequinolones J1 and J2. The conversion of the styrenyl quinolone into the tetrahydrofuran-containing yaequinolone C is performed by the FAD-dependent monooxygenase penE and involves epoxidation of the terminal C7'-C8' olefin, followed by epoxide ring opening initiated by the C3' hydroxyl group. The predicted cysteine hydrolase penJ acts as an epoxide hydrolase that enhances the rate of the 5-exo-tet cyclization step, increasing the yield of yaequinolone C. PenF catalyzes the cationic rearrangement of the epoxide formed by penE (before ring opening to produce yaequinolone C) into yaequinolone D. Finally, the short-chain dehydrogenase/reductase (SDR)-like reductase penD, catalyzes both the dehydration of yaequinolone D and the reduction of the resulting oxonium to yield penigequinolone. In Penicillium thymicola, this protein is O-methyltransferase penC.